The sequence spans 281 residues: sn-glycerol-3-phosphate transport system permease protein UgpE (281 aa).

A run of 6 helical transmembrane segments spans residues 14-34 (VMLI…FVAA), 82-104 (VMAF…AIVY), 113-133 (FFWL…FPTI), 142-162 (LDSY…TFLF), 188-210 (FWDI…TFIY), and 247-267 (WNQV…VVLL). The region spanning 77 to 268 (LFNSFVMAFA…IPPVAVVLLM (192 aa)) is the ABC transmembrane type-1 domain.

The protein belongs to the binding-protein-dependent transport system permease family. UgpAE subfamily. As to quaternary structure, the complex is composed of two ATP-binding proteins (UgpC), two transmembrane proteins (UgpA and UgpE) and a solute-binding protein (UgpB).

Its subcellular location is the cell inner membrane. Part of the ABC transporter complex UgpBAEC involved in sn-glycerol-3-phosphate (G3P) import. Probably responsible for the translocation of the substrate across the membrane. The polypeptide is sn-glycerol-3-phosphate transport system permease protein UgpE (ugpE) (Yersinia enterocolitica serotype O:8 / biotype 1B (strain NCTC 13174 / 8081)).